We begin with the raw amino-acid sequence, 77 residues long: MAGRKGGRAKRRKVCFFTANGITHIDYKDVDLLKRFVSERGKILPRRVTGTSAKYQRKLTVAIKRARQMALLPYVGE.

This sequence belongs to the bacterial ribosomal protein bS18 family. Part of the 30S ribosomal subunit. Forms a tight heterodimer with protein bS6.

In terms of biological role, binds as a heterodimer with protein bS6 to the central domain of the 16S rRNA, where it helps stabilize the platform of the 30S subunit. The chain is Small ribosomal subunit protein bS18 from Bacillus cytotoxicus (strain DSM 22905 / CIP 110041 / 391-98 / NVH 391-98).